The following is a 276-amino-acid chain: Large ribosomal subunit protein uL2 (276 aa).

2 disordered regions span residues 30–57 and 219–276; these read EKSL…QGGG and TVRG…RSKK.

It belongs to the universal ribosomal protein uL2 family. In terms of assembly, part of the 50S ribosomal subunit. Forms a bridge to the 30S subunit in the 70S ribosome.

Functionally, one of the primary rRNA binding proteins. Required for association of the 30S and 50S subunits to form the 70S ribosome, for tRNA binding and peptide bond formation. It has been suggested to have peptidyltransferase activity; this is somewhat controversial. Makes several contacts with the 16S rRNA in the 70S ribosome. The sequence is that of Large ribosomal subunit protein uL2 from Exiguobacterium sibiricum (strain DSM 17290 / CCUG 55495 / CIP 109462 / JCM 13490 / 255-15).